A 155-amino-acid polypeptide reads, in one-letter code: Interleukin-2 (155 aa).

An N-terminal signal peptide occupies residues 1–20 (MYKMQLVACIALSLVLITNS). An O-linked (GalNAc...) threonine glycan is attached at T23. A disulfide bond links C77 and C125.

The protein belongs to the IL-2 family.

The protein localises to the secreted. Its function is as follows. Cytokine produced by activated CD4-positive helper T-cells and to a lesser extend activated CD8-positive T-cells and natural killer (NK) cells that plays pivotal roles in the immune response and tolerance. Binds to a receptor complex composed of either the high-affinity trimeric IL-2R (IL2RA/CD25, IL2RB/CD122 and IL2RG/CD132) or the low-affinity dimeric IL-2R (IL2RB and IL2RG). Interaction with the receptor leads to oligomerization and conformation changes in the IL-2R subunits resulting in downstream signaling starting with phosphorylation of JAK1 and JAK3. In turn, JAK1 and JAK3 phosphorylate the receptor to form a docking site leading to the phosphorylation of several substrates including STAT5. This process leads to activation of several pathways including STAT, phosphoinositide-3-kinase/PI3K and mitogen-activated protein kinase/MAPK pathways. Functions as a T-cell growth factor and can increase NK-cell cytolytic activity as well. Promotes strong proliferation of activated B-cells and subsequently immunoglobulin production. Plays a pivotal role in regulating the adaptive immune system by controlling the survival and proliferation of regulatory T-cells, which are required for the maintenance of immune tolerance. Moreover, participates in the differentiation and homeostasis of effector T-cell subsets, including Th1, Th2, Th17 as well as memory CD8-positive T-cells. The chain is Interleukin-2 (IL2) from Dasypus novemcinctus (Nine-banded armadillo).